Here is a 258-residue protein sequence, read N- to C-terminus: Granzyme M (258 aa).

Residues isoleucine 21–glycine 250 form the Peptidase S1 domain. An intrachain disulfide couples cysteine 46 to cysteine 62. Residues histidine 61 and aspartate 107 each act as charge relay system in the active site. Residues asparagine 122–arginine 141 are disordered. 3 cysteine pairs are disulfide-bonded: cysteine 142/cysteine 210, cysteine 173/cysteine 189, and cysteine 200/cysteine 226. A glycan (N-linked (GlcNAc...) asparagine) is linked at asparagine 174. The active-site Charge relay system is serine 204. Residue asparagine 225 is glycosylated (N-linked (GlcNAc...) asparagine).

This sequence belongs to the peptidase S1 family. Granzyme subfamily.

The protein localises to the secreted. Its subcellular location is the cytoplasmic granule. Cleaves peptide substrates after methionine, leucine, and norleucine. Physiological substrates include EZR, alpha-tubulins and the apoptosis inhibitor BIRC5/Survivin. Promotes caspase activation and subsequent apoptosis of target cells. The chain is Granzyme M (Gzmm) from Rattus norvegicus (Rat).